We begin with the raw amino-acid sequence, 297 residues long: Homoserine kinase (297 aa).

Residue 82 to 92 participates in ATP binding; that stretch reads PLTRGLGSSAS.

The protein belongs to the GHMP kinase family. Homoserine kinase subfamily.

The protein resides in the cytoplasm. The catalysed reaction is L-homoserine + ATP = O-phospho-L-homoserine + ADP + H(+). The protein operates within amino-acid biosynthesis; L-threonine biosynthesis; L-threonine from L-aspartate: step 4/5. Catalyzes the ATP-dependent phosphorylation of L-homoserine to L-homoserine phosphate. The chain is Homoserine kinase from Bacillus cereus (strain G9842).